The following is a 414-amino-acid chain: Esterase FrsA (414 aa).

It belongs to the FrsA family.

It carries out the reaction a carboxylic ester + H2O = an alcohol + a carboxylate + H(+). Its function is as follows. Catalyzes the hydrolysis of esters. This Salmonella agona (strain SL483) protein is Esterase FrsA.